Here is a 389-residue protein sequence, read N- to C-terminus: Ribonucleoside-diphosphate reductase subunit M2 (389 aa).

A Phosphoserine modification is found at Ser-20. Thr-33 is subject to Phosphothreonine. Positions 49 to 51 match the Cy motif; sequence RRI. Asp-138, Glu-169, and His-172 together coordinate Fe cation. Tyr-176 is an active-site residue. The Fe cation site is built by Glu-232, Glu-266, and His-269.

This sequence belongs to the ribonucleoside diphosphate reductase small chain family. Heterodimer of a large and a small subunit. Interacts (via Cy motif and when phosphorylated at Thr-33) with CCNF; the interaction occurs exclusively in G2 and early M. Fe cation is required as a cofactor. Phosphorylation on Ser-20 relieves the inhibitory effect on Wnt signaling. Phosphorylated on Thr-33 by CDK1 and CDK2; predominantly in G2 and M phase. Post-translationally, ubiquitinated by the SCF(CCNF) E3 ubiquitin-protein ligase complex; leading to its degradation by the proteasome.

It is found in the cytoplasm. The protein localises to the nucleus. It catalyses the reaction a 2'-deoxyribonucleoside 5'-diphosphate + [thioredoxin]-disulfide + H2O = a ribonucleoside 5'-diphosphate + [thioredoxin]-dithiol. Provides the precursors necessary for DNA synthesis. Catalyzes the biosynthesis of deoxyribonucleotides from the corresponding ribonucleotides. Inhibits Wnt signaling. The sequence is that of Ribonucleoside-diphosphate reductase subunit M2 (RRM2) from Macaca fascicularis (Crab-eating macaque).